A 40-amino-acid chain; its full sequence is Spodomicin (40 aa).

Intrachain disulfides connect C6-C20, C10-C32, and C21-C39.

As to quaternary structure, monomer. In terms of processing, contains three disulfide bonds. As to expression, hemolymph.

It is found in the secreted. Fungicide. The protein is Spodomicin of Spodoptera littoralis (Egyptian cotton leafworm).